Reading from the N-terminus, the 301-residue chain is Acetylglutamate kinase (301 aa).

Residues 68 to 69 (GG), arginine 90, and asparagine 195 each bind substrate.

Belongs to the acetylglutamate kinase family. ArgB subfamily.

It localises to the cytoplasm. It catalyses the reaction N-acetyl-L-glutamate + ATP = N-acetyl-L-glutamyl 5-phosphate + ADP. The protein operates within amino-acid biosynthesis; L-arginine biosynthesis; N(2)-acetyl-L-ornithine from L-glutamate: step 2/4. Functionally, catalyzes the ATP-dependent phosphorylation of N-acetyl-L-glutamate. The chain is Acetylglutamate kinase from Pseudomonas entomophila (strain L48).